Reading from the N-terminus, the 353-residue chain is Alcohol dehydrogenase 1 (353 aa).

The Zn(2+) site is built by cysteine 47, histidine 70, cysteine 101, cysteine 104, cysteine 107, cysteine 115, and cysteine 157. Residues 181-187 (GAGGGLG), aspartate 205, lysine 210, 274-276 (IGL), and arginine 346 each bind NAD(+).

It belongs to the zinc-containing alcohol dehydrogenase family. In terms of assembly, homotetramer. Requires Zn(2+) as cofactor.

It is found in the cytoplasm. It catalyses the reaction a primary alcohol + NAD(+) = an aldehyde + NADH + H(+). The enzyme catalyses a secondary alcohol + NAD(+) = a ketone + NADH + H(+). This is Alcohol dehydrogenase 1 (adh-1) from Neurospora crassa (strain ATCC 24698 / 74-OR23-1A / CBS 708.71 / DSM 1257 / FGSC 987).